The primary structure comprises 217 residues: Urease accessory protein UreE (217 aa).

The segment at 148 to 217 (AYGEAAAHGH…DHDHGSGHHH (70 aa)) is disordered. Over residues 160 to 171 (AGHDHAHDHDHG) the composition is skewed to basic and acidic residues. The segment covering 193–202 (AAAPAPHVHG) has biased composition (low complexity). The segment covering 206-217 (GHDHDHGSGHHH) has biased composition (basic and acidic residues).

It belongs to the UreE family.

Its subcellular location is the cytoplasm. Involved in urease metallocenter assembly. Binds nickel. Probably functions as a nickel donor during metallocenter assembly. The chain is Urease accessory protein UreE from Methylibium petroleiphilum (strain ATCC BAA-1232 / LMG 22953 / PM1).